The primary structure comprises 204 residues: Methylthioribulose-1-phosphate dehydratase (204 aa).

Residues H94 and H96 each coordinate Zn(2+).

It belongs to the aldolase class II family. MtnB subfamily. Zn(2+) is required as a cofactor.

The enzyme catalyses 5-(methylsulfanyl)-D-ribulose 1-phosphate = 5-methylsulfanyl-2,3-dioxopentyl phosphate + H2O. Its pathway is amino-acid biosynthesis; L-methionine biosynthesis via salvage pathway; L-methionine from S-methyl-5-thio-alpha-D-ribose 1-phosphate: step 2/6. Functionally, catalyzes the dehydration of methylthioribulose-1-phosphate (MTRu-1-P) into 2,3-diketo-5-methylthiopentyl-1-phosphate (DK-MTP-1-P). The chain is Methylthioribulose-1-phosphate dehydratase from Serratia proteamaculans (strain 568).